Consider the following 365-residue polypeptide: Synapse-associated protein 1 (365 aa).

The interval Met-1–Leu-65 is disordered. Low complexity predominate over residues Glu-52–Pro-62. The BSD domain maps to Val-172–Lys-224. Residues Gln-237–Arg-259 form a disordered region. Positions Gly-240–Asn-251 are enriched in basic and acidic residues. At Thr-262 the chain carries Phosphothreonine. 3 positions are modified to phosphoserine: Ser-283, Ser-298, and Ser-327. Positions Val-344–Ser-365 are disordered. Positions Glu-346 to Ser-365 are enriched in basic and acidic residues.

In terms of assembly, interacts (via phosphorylated form and BSD domain) with AKT1; this interaction is enhanced in a mTORC2-mediated manner in response to epidermal growth factor (EGF) stimulation and activates AKT1. In terms of processing, phosphorylated. Phosphorylation increases in a mTORC2-mediated manner in response to epidermal growth factor (EGF) stimulation. As to expression, expressed in the liver, kidney, skeletal muscle and in white and brown adipose tissues. Expressed in the cortex, cerebellum, thalamus, hippocampus, braistem, olfactory bulb, spinal cord and striatum of the brain. Expressed in most neuropil regions containing glutamatergic synaptic terminals. Expressed in the CA1, CA2 and CA3 perikarya of the hippocampus. Expressed in neurons and Purkinje cells (at the protein level).

The protein resides in the cytoplasm. It is found in the perinuclear region. It localises to the golgi apparatus. Its subcellular location is the perikaryon. The protein localises to the cell projection. The protein resides in the axon. It is found in the dendrite. It localises to the growth cone. Its subcellular location is the presynaptic cell membrane. The protein localises to the postsynaptic cell membrane. The protein resides in the membrane. Its function is as follows. Plays a role in adipocyte differentiation by promoting mTORC2-mediated phosphorylation of AKT1 at 'Ser-473' after growth factor stimulation. The sequence is that of Synapse-associated protein 1 from Mus musculus (Mouse).